We begin with the raw amino-acid sequence, 238 residues long: Expansin-like protein 5 (238 aa).

An N-terminal signal peptide occupies residues 1 to 21; sequence MRINFKLILIILTSFYGIINC. Residues 45–145 form the Expansin-like EG45 domain; sequence NGNCGFGKLT…VKVPCRVSGN (101 aa). Cystine bridges form between C48-C78 and C81-C140. An N-linked (GlcNAc...) asparagine glycan is attached at N89.

Belongs to the expansin family. Expansin A subfamily.

The protein resides in the secreted. Its function is as follows. May serve to lubricate the movement of the cellulose microfibrils during cell growth and wall extension and/or may serve to maintain the fluid state of the slug cell wall. The chain is Expansin-like protein 5 (expl5) from Dictyostelium discoideum (Social amoeba).